Here is a 96-residue protein sequence, read N- to C-terminus: UPF0235 protein VIBHAR_03581 (96 aa).

The protein belongs to the UPF0235 family.

In Vibrio campbellii (strain ATCC BAA-1116), this protein is UPF0235 protein VIBHAR_03581.